A 229-amino-acid polypeptide reads, in one-letter code: Predicted GPI-anchored protein 19 (229 aa).

The N-terminal stretch at 1 to 20 (MFSTTSIVLWFTILLPVTLP) is a signal peptide. The interval 63-92 (DNEQVLRKSKKKKKTTSTGTPGNENTTDFA) is disordered. Residues 81–92 (GTPGNENTTDFA) show a composition bias toward polar residues. Residues asparagine 87, asparagine 184, and asparagine 189 are each glycosylated (N-linked (GlcNAc...) asparagine). Glycine 208 carries the GPI-anchor amidated glycine lipid modification. A propeptide spans 209 to 229 (FGSLIPYNSFYLYILLFCIIF) (removed in mature form).

Its subcellular location is the cell membrane. Predicted GPI-anchored protein which may have a role during host infection. The protein is Predicted GPI-anchored protein 19 (PGA19) of Candida albicans (strain SC5314 / ATCC MYA-2876) (Yeast).